Here is a 189-residue protein sequence, read N- to C-terminus: Glycerol-3-phosphate acyltransferase (189 aa).

Transmembrane regions (helical) follow at residues 1–21 (MFWL…AIVL), 50–70 (KLAI…VLLA), 77–97 (LHAQ…PLYF), 111–131 (MLMG…LLTF), and 151–171 (LLAW…AMIV).

It belongs to the PlsY family. As to quaternary structure, probably interacts with PlsX.

It localises to the cell inner membrane. It carries out the reaction an acyl phosphate + sn-glycerol 3-phosphate = a 1-acyl-sn-glycero-3-phosphate + phosphate. It functions in the pathway lipid metabolism; phospholipid metabolism. Its function is as follows. Catalyzes the transfer of an acyl group from acyl-phosphate (acyl-PO(4)) to glycerol-3-phosphate (G3P) to form lysophosphatidic acid (LPA). This enzyme utilizes acyl-phosphate as fatty acyl donor, but not acyl-CoA or acyl-ACP. This is Glycerol-3-phosphate acyltransferase from Pseudomonas putida (strain GB-1).